The chain runs to 686 residues: Phosphatidylinositol 4,5-bisphosphate-binding protein SLM1 (686 aa).

The disordered stretch occupies residues 33–147 (RSMTSADHAN…KQLQGKNSLT (115 aa)). Residues 45-63 (QQQQQQQQQQQQQQQQQQQ) are compositionally biased toward low complexity. Residues 64-126 (SASFQNGSLT…PNIDSNTNVT (63 aa)) show a composition bias toward polar residues. Residues 133–144 (NNNNGKQLQGKN) show a composition bias toward low complexity. Phosphoserine is present on residues serine 145, serine 150, and serine 153. Low complexity predominate over residues 157–172 (SSLQRQRLAQQQQQQQ). The segment at 157–176 (SSLQRQRLAQQQQQQQDPRS) is disordered. Residues 296–381 (RLEDLRRDLI…FLHEAFDNLE (86 aa)) are a coiled coil. The PH domain maps to 468–581 (YEIKSGFLER…WFDNLKILTS (114 aa)). The tract at residues 626 to 669 (VENDENDDINSNYVGSTVTPKLDNQTNTNTSMSSLPDTNDSELQ) is disordered. Residues 634 to 663 (INSNYVGSTVTPKLDNQTNTNTSMSSLPDT) are compositionally biased toward polar residues. The PXIXIT-like, required for interaction with CNA1 and CNA2, and calcineurin-dependent dephosphorylation signature appears at 673–678 (PNIYIQ).

Heterodimer of SLM1-SLM2. Binds phosphatidylinositol 4,5-bisphosphate, which is required for function. Interacts with the TORC2 subunits AVO2, BIT61 and TOR2. Interacts with the calcineurin catalytic subunits CNA1 and CNA2. Post-translationally, phosphorylated by the target of rapamycin complex 2 (TORC2) and dephosphorylated by serine/threonine-protein phosphatase 2B (calcineurin). Dephosphorylated in response to the disruption or inhibition of sphingolipid synthesis.

The protein resides in the cell membrane. Functionally, together with SLM2, acts as an effector of the TORC2- and calcineurin-signaling pathways. Phosphorylated and activated by TORC2 under favorable growth conditions. Mediates actin polarization via inhibition of calcineurin-dependent transcription. Upon nutrient limitation or environmental stress, gets dephosphorylated by calcineurin. Dephosphorylation inhibits its interaction with TORC2, thereby antagonizing TORC2 signaling and mediating calcineurin-dependent actin depolarization. May play a role in the response to the disruption of sphingolipid synthesis, where dephosphorylation of SLM1 leads to the activation and phosphorylation of YPK1 through the TORC2 and PKH1 pathways, which in turn phosphorylates ORM1 and LAG1 to activate sphingolipid synthesis. Also functions in heat-induced, calcineurin-mediated uracil permease (FUR4) endocytosis. This Saccharomyces cerevisiae (strain ATCC 204508 / S288c) (Baker's yeast) protein is Phosphatidylinositol 4,5-bisphosphate-binding protein SLM1 (SLM1).